Here is a 96-residue protein sequence, read N- to C-terminus: Guanine nucleotide-binding protein alpha-9 subunit (96 aa).

The region spanning 2-96 is the G-alpha domain; that stretch reads YFHSTAIILF…ISASLKMVGV (95 aa). Residues 9-16 form a G1 motif region; it reads ILFLNKID. Residues 13–16 and Ala-69 each bind GTP; that span reads NKID. The G2 motif stretch occupies residues 67–72; sequence TSATDT.

The protein belongs to the G-alpha family. As to quaternary structure, g proteins are composed of 3 units; alpha, beta and gamma. The alpha chain contains the guanine nucleotide binding site. Expressed in ASJ neurons.

Guanine nucleotide-binding proteins (G proteins) are involved as modulators or transducers in various transmembrane signaling systems. Plays a role in innate immunity and maintaining survival in response to metabolites of E.coli. This might be by regulating the expression and signaling of genes such as lys-8, ins-7 and daf-28. Has a role in lifespan to promote longevity. In Caenorhabditis elegans, this protein is Guanine nucleotide-binding protein alpha-9 subunit.